The chain runs to 417 residues: Serine hydroxymethyltransferase (417 aa).

(6S)-5,6,7,8-tetrahydrofolate-binding positions include L121 and 125–127; that span reads GHL. K230 bears the N6-(pyridoxal phosphate)lysine mark. Residue 355–357 coordinates (6S)-5,6,7,8-tetrahydrofolate; the sequence is SPF.

The protein belongs to the SHMT family. Homodimer. Requires pyridoxal 5'-phosphate as cofactor.

The protein localises to the cytoplasm. The catalysed reaction is (6R)-5,10-methylene-5,6,7,8-tetrahydrofolate + glycine + H2O = (6S)-5,6,7,8-tetrahydrofolate + L-serine. It participates in one-carbon metabolism; tetrahydrofolate interconversion. The protein operates within amino-acid biosynthesis; glycine biosynthesis; glycine from L-serine: step 1/1. Its function is as follows. Catalyzes the reversible interconversion of serine and glycine with tetrahydrofolate (THF) serving as the one-carbon carrier. This reaction serves as the major source of one-carbon groups required for the biosynthesis of purines, thymidylate, methionine, and other important biomolecules. Also exhibits THF-independent aldolase activity toward beta-hydroxyamino acids, producing glycine and aldehydes, via a retro-aldol mechanism. The protein is Serine hydroxymethyltransferase of Legionella pneumophila (strain Lens).